The sequence spans 339 residues: Protein LicA (339 aa).

9 consecutive repeat copies span residues Ile-4 to Ser-7, Ile-8 to Ser-11, Ile-12 to Ser-15, Ile-16 to Ser-19, Ile-20 to Ser-23, Ile-24 to Ser-27, Ile-28 to Ser-31, Ile-32 to Ser-35, and Ile-36 to Ser-39. The segment at Ile-4–Ser-39 is 9 X 4 AA tandem repeats of I-N-Q-S.

This sequence belongs to the peptidase S49 family.

In terms of biological role, mediates phase variation of the LOS 6A2 and 12D9 epitopes. Phase variation of H.influenza LOS epitopes expressed by LicA is determined by a translational switch. This chain is Protein LicA (licA), found in Haemophilus influenzae.